The sequence spans 455 residues: Nucleoside-triphosphatase (455 aa).

Glutamate 168 (proton acceptor) is an active-site residue.

It belongs to the GDA1/CD39 NTPase family.

Its subcellular location is the nucleus. It catalyses the reaction a ribonucleoside 5'-triphosphate + H2O = a ribonucleoside 5'-diphosphate + phosphate + H(+). Functionally, might be involved in RNA transport out of nuclei. In Pisum sativum (Garden pea), this protein is Nucleoside-triphosphatase.